Consider the following 103-residue polypeptide: Large ribosomal subunit protein bL21 (103 aa).

The protein belongs to the bacterial ribosomal protein bL21 family. In terms of assembly, part of the 50S ribosomal subunit. Contacts protein L20.

Its function is as follows. This protein binds to 23S rRNA in the presence of protein L20. In Legionella pneumophila (strain Lens), this protein is Large ribosomal subunit protein bL21.